Here is a 250-residue protein sequence, read N- to C-terminus: tRNA (guanine-N(1)-)-methyltransferase (250 aa).

S-adenosyl-L-methionine is bound by residues Gly113 and 133-138; that span reads IGDYVL.

This sequence belongs to the RNA methyltransferase TrmD family. Homodimer.

It localises to the cytoplasm. The catalysed reaction is guanosine(37) in tRNA + S-adenosyl-L-methionine = N(1)-methylguanosine(37) in tRNA + S-adenosyl-L-homocysteine + H(+). In terms of biological role, specifically methylates guanosine-37 in various tRNAs. This Photorhabdus laumondii subsp. laumondii (strain DSM 15139 / CIP 105565 / TT01) (Photorhabdus luminescens subsp. laumondii) protein is tRNA (guanine-N(1)-)-methyltransferase.